A 217-amino-acid chain; its full sequence is Large ribosomal subunit protein uL1 (217 aa).

Belongs to the universal ribosomal protein uL1 family. In terms of assembly, component of the large ribosomal subunit (LSU). Mature ribosomes consist of a small (40S) and a large (60S) subunit. The 40S subunit contains about 32 different proteins and 1 molecule of RNA (18S). The 60S subunit contains 45 different proteins and 3 molecules of RNA (25S, 5.8S and 5S). uL1 forms part of the L1 stalk.

The protein localises to the cytoplasm. Functionally, component of the ribosome, a large ribonucleoprotein complex responsible for the synthesis of proteins in the cell. The small ribosomal subunit (SSU) binds messenger RNAs (mRNAs) and translates the encoded message by selecting cognate aminoacyl-transfer RNA (tRNA) molecules. The large subunit (LSU) contains the ribosomal catalytic site termed the peptidyl transferase center (PTC), which catalyzes the formation of peptide bonds, thereby polymerizing the amino acids delivered by tRNAs into a polypeptide chain. The nascent polypeptides leave the ribosome through a tunnel in the LSU and interact with protein factors that function in enzymatic processing, targeting, and the membrane insertion of nascent chains at the exit of the ribosomal tunnel. uL1 forms part of the L1 stalk, a mobile element that plays a role in evacuating the exit-site tRNA. In Candida albicans (strain SC5314 / ATCC MYA-2876) (Yeast), this protein is Large ribosomal subunit protein uL1 (RPL10A).